The chain runs to 111 residues: Large ribosomal subunit protein uL22 (111 aa).

Belongs to the universal ribosomal protein uL22 family. In terms of assembly, part of the 50S ribosomal subunit.

Its function is as follows. This protein binds specifically to 23S rRNA; its binding is stimulated by other ribosomal proteins, e.g. L4, L17, and L20. It is important during the early stages of 50S assembly. It makes multiple contacts with different domains of the 23S rRNA in the assembled 50S subunit and ribosome. In terms of biological role, the globular domain of the protein is located near the polypeptide exit tunnel on the outside of the subunit, while an extended beta-hairpin is found that lines the wall of the exit tunnel in the center of the 70S ribosome. The protein is Large ribosomal subunit protein uL22 of Acidithiobacillus ferrooxidans (strain ATCC 23270 / DSM 14882 / CIP 104768 / NCIMB 8455) (Ferrobacillus ferrooxidans (strain ATCC 23270)).